A 125-amino-acid polypeptide reads, in one-letter code: Holo-[acyl-carrier-protein] synthase (125 aa).

Residues aspartate 8 and glutamate 57 each contribute to the Mg(2+) site.

This sequence belongs to the P-Pant transferase superfamily. AcpS family. Mg(2+) is required as a cofactor.

The protein resides in the cytoplasm. The enzyme catalyses apo-[ACP] + CoA = holo-[ACP] + adenosine 3',5'-bisphosphate + H(+). Functionally, transfers the 4'-phosphopantetheine moiety from coenzyme A to a Ser of acyl-carrier-protein. The sequence is that of Holo-[acyl-carrier-protein] synthase from Natranaerobius thermophilus (strain ATCC BAA-1301 / DSM 18059 / JW/NM-WN-LF).